A 61-amino-acid polypeptide reads, in one-letter code: Small ribosomal subunit protein uS14 (61 aa).

Zn(2+)-binding residues include C24, C27, C40, and C43.

The protein belongs to the universal ribosomal protein uS14 family. Zinc-binding uS14 subfamily. As to quaternary structure, part of the 30S ribosomal subunit. Contacts proteins S3 and S10. The cofactor is Zn(2+).

Binds 16S rRNA, required for the assembly of 30S particles and may also be responsible for determining the conformation of the 16S rRNA at the A site. In Macrococcus caseolyticus (strain JCSC5402) (Macrococcoides caseolyticum), this protein is Small ribosomal subunit protein uS14.